The chain runs to 117 residues: Aspartate 1-decarboxylase (117 aa).

Ser25 (schiff-base intermediate with substrate; via pyruvic acid) is an active-site residue. Ser25 bears the Pyruvic acid (Ser) mark. Thr57 lines the substrate pocket. Catalysis depends on Tyr58, which acts as the Proton donor. 72–74 (GAA) provides a ligand contact to substrate.

This sequence belongs to the PanD family. Heterooctamer of four alpha and four beta subunits. The cofactor is pyruvate. Is synthesized initially as an inactive proenzyme, which is activated by self-cleavage at a specific serine bond to produce a beta-subunit with a hydroxyl group at its C-terminus and an alpha-subunit with a pyruvoyl group at its N-terminus.

Its subcellular location is the cytoplasm. It catalyses the reaction L-aspartate + H(+) = beta-alanine + CO2. Its pathway is cofactor biosynthesis; (R)-pantothenate biosynthesis; beta-alanine from L-aspartate: step 1/1. Catalyzes the pyruvoyl-dependent decarboxylation of aspartate to produce beta-alanine. The polypeptide is Aspartate 1-decarboxylase (Helicobacter pylori (strain J99 / ATCC 700824) (Campylobacter pylori J99)).